Here is a 155-residue protein sequence, read N- to C-terminus: Ribosomal RNA large subunit methyltransferase H (155 aa).

S-adenosyl-L-methionine is bound by residues L72, G104, and 123–128 (LAKITL).

It belongs to the RNA methyltransferase RlmH family. In terms of assembly, homodimer.

It localises to the cytoplasm. The enzyme catalyses pseudouridine(1915) in 23S rRNA + S-adenosyl-L-methionine = N(3)-methylpseudouridine(1915) in 23S rRNA + S-adenosyl-L-homocysteine + H(+). Its function is as follows. Specifically methylates the pseudouridine at position 1915 (m3Psi1915) in 23S rRNA. The polypeptide is Ribosomal RNA large subunit methyltransferase H (Mycoplasma mycoides subsp. mycoides SC (strain CCUG 32753 / NCTC 10114 / PG1)).